Consider the following 73-residue polypeptide: Capsid protein G8P (73 aa).

The signal sequence occupies residues 1–23 (MKKSLVLKASVAVATLVPMLSFA). Residues 24–44 (AEGDDPAKAAFDSLQASATEY) are Periplasmic-facing. A helical membrane pass occupies residues 45–65 (IGYAWAMVVVIVGATIGIKLF). Topologically, residues 66-73 (KKFTSKAS) are cytoplasmic.

Belongs to the inovirus capsid protein family. Homomultimerizes. There are several thousands of this protein in the phage capsid.

It localises to the virion. The protein localises to the host membrane. Its function is as follows. Self assembles to form a helical capsid wrapping up the viral genomic DNA. The capsid displays a filamentous structure with a length of 760-1950 nm and a width of 6-8 nm. The virion assembly and budding take place at the host inner membrane. This chain is Capsid protein G8P (VIII), found in Escherichia coli (Bacteriophage f1).